We begin with the raw amino-acid sequence, 400 residues long: MDAWRGMPRWGLLLLLWGSCTFGLPTETTTFKRISLKRMPSIRESLKERGVDMARLGPERMALVNITSSVILTNYMDTQYYGEIGIGTPPQTFKVVFDTGSSNVWVPSSKCSRLYTACVYHKLFDASDSSSYKHNGTELTLRYSTGTVSGFLSQDVITVGGITVTQTFGEVTEMPALPFMLAEFDGVVGMGFSEQAIGKVTPLFDNIISQGLLKEDVFSFYYNRDSENSQSLGGQIVLGGSDPQHYEGNFHYINLIRTGLWQIPMKGVSVGSSTLLCEDGCLALVDTGASYISGSTSSIEKLMEALGAKKRLFDYVVKCNEGPTLPDISFHLGGKEYTLTSADYVFQESYSSKKLCTLAIHAMDIPPPTGPTWALGATFIRKFYTEFDRGNNRIGFALAR.

The N-terminal stretch at 1-23 (MDAWRGMPRWGLLLLLWGSCTFG) is a signal peptide. A propeptide spans 24-60 (LPTETTTFKRISLKRMPSIRESLKERGVDMARLGPER) (activation peptide). A glycan (N-linked (GlcNAc...) asparagine) is linked at N65. The Peptidase A1 domain occupies 80–397 (YYGEIGIGTP…DRGNNRIGFA (318 aa)). The active site involves D98. Cysteines 111 and 118 form a disulfide. An N-linked (GlcNAc...) asparagine glycan is attached at N135. An intrachain disulfide couples C277 to C281. Residue D286 is part of the active site. A disulfide bridge connects residues C319 and C356.

Belongs to the peptidase A1 family. In terms of assembly, interacts with ATP6AP2.

The protein localises to the secreted. It localises to the membrane. It catalyses the reaction Cleavage of Leu-|-Xaa bond in angiotensinogen to generate angiotensin I.. Its activity is regulated as follows. Interaction with ATP6AP2 results in a 5-fold increased efficiency in angiotensinogen processing. In terms of biological role, renin is a highly specific endopeptidase, whose only known function is to generate angiotensin I from angiotensinogen in the plasma, initiating a cascade of reactions that produce an elevation of blood pressure and increased sodium retention by the kidney. The polypeptide is Renin (REN) (Callithrix jacchus (White-tufted-ear marmoset)).